Reading from the N-terminus, the 1693-residue chain is Non-structural polyprotein pORF1 (1693 aa).

The 185-residue stretch at 56–240 folds into the Alphavirus-like MT domain; the sequence is VFRPEVFWNH…HDVSNLRSWI (185 aa). Positions 60–240 are methyltransferase; that stretch reads EVFWNHPIQR…HDVSNLRSWI (181 aa). Residues 241-439 are Y-domain; sequence RTTKVTGDHP…FYAQCRRWLS (199 aa). A disulfide bridge links Cys-434 with Cys-481. Positions 442–509 are putative protease; that stretch reads FHLDPRVLVF…EAYEGSDVDP (68 aa). The interval 510–691 is zinc-binding; that stretch reads AESAISDISG…FSPGHVWESA (182 aa). Zn(2+)-binding residues include His-671, Glu-673, and His-686. Residues 712 to 778 are hinge; sequence SSPARPDLGF…AITHQTARHR (67 aa). Positions 732-768 are disordered; the sequence is ATPTLAAPLPPPAPDPSPPPSAPALAEPASGATAGAP. The span at 739–753 shows a compositional bias: pro residues; the sequence is PLPPPAPDPSPPPSA. Residues 754-768 are compositionally biased toward low complexity; it reads PALAEPASGATAGAP. The Macro domain maps to 775 to 921; sequence ARHRRLLFTY…LYLPELAARW (147 aa). The tract at residues 785–942 is X-domain; the sequence is PDGSKVFAGS…TITEDVARTA (158 aa). The 149-residue stretch at 934 to 1082 folds into the (+)RNA virus helicase ATP-binding domain; that stretch reads ITEDVARTAN…RPDLGPTSWW (149 aa). The tract at residues 960–1204 is NTPase/helicase; that stretch reads GCRVTPGVVQ…ISDAIVNNFF (245 aa). 975-982 lines the ATP pocket; it reads GVPGSGKS. Positions 1083-1216 constitute a (+)RNA virus helicase C-terminal domain; sequence HVTHRWPADV…GGEIGHQRPS (134 aa). The segment at 1207 to 1693 is RNA-directed RNA polymerase; that stretch reads GGEIGHQRPS…LTNSILCRVE (487 aa). In terms of domain architecture, RdRp catalytic spans 1454-1565; that stretch reads SMVFENDFSE…LCSEYRQSPG (112 aa).

It belongs to the hepevirus non-structural polyprotein family. As to quaternary structure, the protease domain interacts with host EIF2AK4 (via C-terminus); this interaction inhibits dimerization of EIF2AK4 and prevents EIF2AK4-mediated phosphorylation of host EIF2A. Mg(2+) serves as cofactor. In terms of processing, ORF1 polyprotein does not seem to be processed into distinct enzymatic domains by a viral protease belonging to ORF1, but could be processed by a host serine protease like thrombin.

The protein resides in the host cytoplasm. Its subcellular location is the host perinuclear region. It carries out the reaction RNA(n) + a ribonucleoside 5'-triphosphate = RNA(n+1) + diphosphate. The enzyme catalyses GTP + S-adenosyl-L-methionine = N(7)-methyl-GTP + S-adenosyl-L-homocysteine. Its activity is regulated as follows. Putative protease: Inhibited by chymostatin. Methyltransferase: Displays a capping enzyme activity. This function is necessary since all viral RNAs are synthesized in the cytoplasm, and host capping enzymes are restricted to the nucleus. The enzymatic reaction involves a covalent link between 7-methyl-GMP and the methyltransferase, whereas eukaryotic capping enzymes form a covalent complex only with GMP. Methyltransferase catalyzes transfer of a methyl group from S-adenosylmethionine to GTP and GDP to yield m(7)GTP or m(7)GDP. GDP is a better substrate than GTP. This enzyme also displays guanylyltransferase activity to form a covalent complex, methyltransferase-m(7)GMP, from which 7-methyl-GMP is transferred to the mRNA to create the cap structure. Its function is as follows. Y-domain: Indispensable for virus replication. In terms of biological role, putative protease: The putative protease domain although necessary for replication of the virus may not be a protease but rather a structural Zn(2+)-binding domain. Inhibits induction of IFN-beta by MDA5 and RIG-I pathways and down-regulates the expression of MDA5. Functionally, NTPase/helicase: Multi-functional protein that exhibits NTPase and RNA unwinding activities. Hydrolyzes all NTPs efficiently and unwinds RNA duplexes containing 5' overhangs. Possesses a sequence independent RNA-5'-triphosphatase (RTPase) activity suggestive of its role in forming viral cap structure. Also participates in viral genome replication, RNA translocation and genome packaging/unpackaging. RNA-directed RNA polymerase: Plays an essential role in the virus replication. Binds to the 3'-end of the genomic RNA to initiate viral replication. This Homo sapiens (Human) protein is Non-structural polyprotein pORF1.